A 243-amino-acid polypeptide reads, in one-letter code: MREKHYSEDNSRKRKRGELEHNSDLNETVLPSDWTPDPVKNFAADDDDEETKAKDATMVLPFVKKSPVWKIYESMEVFKRVPQSPHFSPLFEAKEDFREGFALGMMVTFSGVLEKVEDLKTDVPIRQLNSLKDSFTELEKHGFTVTAPLSRIAKLLALKDRQLKILEELKVFDKEMKDESSKKHKAEQEFGEMERKILEVKNKVLELQKQEAALEKQKDATYEKICKMESRARDLGVELEDVE.

Residues methionine 1 to aspartate 24 are compositionally biased toward basic and acidic residues. The segment at methionine 1–threonine 51 is disordered. One can recognise a DUF724 domain in the interval valine 59 to glutamate 243. Residues lysine 174–glutamate 223 are a coiled coil.

As to quaternary structure, homodimer. As to expression, expressed in leaves, flowers and siliques.

The protein resides in the nucleus. In terms of biological role, may be involved in the polar growth of plant cells via transportation of RNAs. The protein is DUF724 domain-containing protein 5 of Arabidopsis thaliana (Mouse-ear cress).